The primary structure comprises 512 residues: Cytokinin hydroxylase (512 aa).

A helical transmembrane segment spans residues 2 to 22; that stretch reads MVTLVLKYVLVIVMTLILRVL. Cys458 is a binding site for heme.

This sequence belongs to the cytochrome P450 family. It depends on heme as a cofactor. Specifically expressed in roots.

The protein resides in the membrane. The catalysed reaction is N(6)-(dimethylallyl)adenosine 5'-phosphate + NADPH + O2 + H(+) = 9-ribosyl-trans-zeatin 5'-phosphate + NADP(+) + H2O. It catalyses the reaction N(6)-(dimethylallyl)adenosine 5'-diphosphate + NADPH + O2 + H(+) = 9-ribosyl-trans-zeatin 5'-diphosphate + NADP(+) + H2O. The enzyme catalyses N(6)-(dimethylallyl)adenosine 5'-triphosphate + NADPH + O2 + H(+) = 9-ribosyl-trans-zeatin 5'-triphosphate + NADP(+) + H2O. In terms of biological role, cytokinin hydroxylase that catalyzes the biosynthesis of trans-zeatin via the isopentenyladenine riboside 5'-monophosphate (iPRMP)-dependent pathway. Can use isopentenyladenosine-5'-monophosphate, isopentenyladenosine-5'-diphosphate and isopentenyladenosine-5'-triphosphate as substrate. The polypeptide is Cytokinin hydroxylase (CYP735A2) (Arabidopsis thaliana (Mouse-ear cress)).